We begin with the raw amino-acid sequence, 302 residues long: m7GpppN-mRNA hydrolase NUDT17 (302 aa).

The region spanning 89-237 is the Nudix hydrolase domain; that stretch reads GRGVDLGVAV…DGTETPKHLP (149 aa). A Nudix box motif is present at residues 128 to 149; sequence GHVEPDEELLDGGLRELWEESG. Mg(2+)-binding residues include E143 and E147.

This sequence belongs to the Nudix hydrolase family. Mg(2+) serves as cofactor. Requires Mn(2+) as cofactor.

It catalyses the reaction a 5'-end (N(7)-methyl 5'-triphosphoguanosine)-ribonucleoside in mRNA + H2O = N(7)-methyl-GDP + a 5'-end phospho-ribonucleoside in mRNA + 2 H(+). Its function is as follows. Acts as a decapping enzyme capable of hydrolyzing monomethylated capped RNAs (in vitro). Hydrolyzes monomethylated capped RNA after alpha and beta phosphates to form N(7)-methyl-GDP. Shows low activity towards unmethylated capped RNA. This Bos taurus (Bovine) protein is m7GpppN-mRNA hydrolase NUDT17 (NUDT17).